Here is a 199-residue protein sequence, read N- to C-terminus: Phosphoheptose isomerase (199 aa).

The region spanning 36-198 (MAQCLLNEHK…DRKLIPSSED (163 aa)) is the SIS domain. 51–53 (NGG) is a substrate binding site. Zn(2+)-binding residues include H60 and E64. Substrate contacts are provided by residues E64, 93–94 (ND), 119–121 (STS), S124, and Q174. Residues Q174 and H182 each coordinate Zn(2+).

It belongs to the SIS family. GmhA subfamily. Homotetramer. The cofactor is Zn(2+).

It localises to the cytoplasm. The catalysed reaction is 2 D-sedoheptulose 7-phosphate = D-glycero-alpha-D-manno-heptose 7-phosphate + D-glycero-beta-D-manno-heptose 7-phosphate. It participates in carbohydrate biosynthesis; D-glycero-D-manno-heptose 7-phosphate biosynthesis; D-glycero-alpha-D-manno-heptose 7-phosphate and D-glycero-beta-D-manno-heptose 7-phosphate from sedoheptulose 7-phosphate: step 1/1. Its function is as follows. Catalyzes the isomerization of sedoheptulose 7-phosphate in D-glycero-D-manno-heptose 7-phosphate. This is Phosphoheptose isomerase from Coxiella burnetii (strain CbuK_Q154) (Coxiella burnetii (strain Q154)).